Here is a 158-residue protein sequence, read N- to C-terminus: Immunoglobulin J chain (158 aa).

The first 22 residues, Met1–Ala22, serve as a signal peptide directing secretion. Disulfide bonds link Cys36–Cys122, Cys95–Cys115, and Cys130–Cys155. N-linked (GlcNAc...) (complex) asparagine glycosylation is present at Asn72.

In terms of assembly, part of the secretory IgA (sIgA) complex that consists of two, four or five IgA monomers, and two additional non-Ig polypeptides, namely the JCHAIN and the secretory component (the proteolytic product of PIGR). Part of the secretory IgM (sIgM) complex that consist of five IgM monomers, and two additional non-Ig polypeptides, namely the JCHAIN and the secretory component (the proteolytic product of PIGR). JCHAIN-containing IgM interacts (via CH4 domain) with FCRM (via Ig-like domain). N-glycosylated. N-glycans attached to Asn-72 varies from truncated, differentially fucosylated to sialylated (NeuGc) complex types: Man3GlcNAc2; GlcNAc2Man3GlcNAc2(Fuc); Gal1GlcNAc1Man3GlcNAc2; GlcNAc2Man3GlcNAc2; GlcNAc1Man3GlcNAc2; GlcNAc1Man2GlcNAc2 and NeuGc1Gal1GlcNAc2Man3GlcNAc2.

It localises to the secreted. In terms of biological role, serves to link two monomer units of either IgM or IgA. In the case of IgM, the J chain-joined dimer is a nucleating unit for the IgM pentamer, and in the case of IgA it induces dimers and/or larger polymers. It also helps to bind these immunoglobulins to secretory component. The polypeptide is Immunoglobulin J chain (JCHAIN) (Equus asinus (Donkey)).